A 337-amino-acid polypeptide reads, in one-letter code: Glyceraldehyde-3-phosphate dehydrogenase (337 aa).

NAD(+) is bound by residues 12-13, D34, R78, and T121; that span reads RI. Residues 151–153, T182, R199, 212–213, and R235 each bind D-glyceraldehyde 3-phosphate; these read SCT and SG. The Nucleophile role is filled by C152. N317 lines the NAD(+) pocket.

It belongs to the glyceraldehyde-3-phosphate dehydrogenase family. In terms of assembly, homotetramer.

Its subcellular location is the cytoplasm. It carries out the reaction D-glyceraldehyde 3-phosphate + phosphate + NAD(+) = (2R)-3-phospho-glyceroyl phosphate + NADH + H(+). Its pathway is carbohydrate degradation; glycolysis; pyruvate from D-glyceraldehyde 3-phosphate: step 1/5. Functionally, catalyzes the oxidative phosphorylation of glyceraldehyde 3-phosphate (G3P) to 1,3-bisphosphoglycerate (BPG) using the cofactor NAD. The first reaction step involves the formation of a hemiacetal intermediate between G3P and a cysteine residue, and this hemiacetal intermediate is then oxidized to a thioester, with concomitant reduction of NAD to NADH. The reduced NADH is then exchanged with the second NAD, and the thioester is attacked by a nucleophilic inorganic phosphate to produce BPG. In Lactococcus lactis subsp. lactis (strain IL1403) (Streptococcus lactis), this protein is Glyceraldehyde-3-phosphate dehydrogenase (gap).